The sequence spans 190 residues: Holliday junction branch migration complex subunit RuvA (190 aa).

Positions Met-1–Lys-63 are domain I. Residues Asp-64 to Ala-138 form a domain II region. The segment at Ala-138–Ser-142 is flexible linker. Residues Tyr-143 to Leu-190 form a domain III region.

It belongs to the RuvA family. In terms of assembly, homotetramer. Forms an RuvA(8)-RuvB(12)-Holliday junction (HJ) complex. HJ DNA is sandwiched between 2 RuvA tetramers; dsDNA enters through RuvA and exits via RuvB. An RuvB hexamer assembles on each DNA strand where it exits the tetramer. Each RuvB hexamer is contacted by two RuvA subunits (via domain III) on 2 adjacent RuvB subunits; this complex drives branch migration. In the full resolvosome a probable DNA-RuvA(4)-RuvB(12)-RuvC(2) complex forms which resolves the HJ.

It localises to the cytoplasm. Functionally, the RuvA-RuvB-RuvC complex processes Holliday junction (HJ) DNA during genetic recombination and DNA repair, while the RuvA-RuvB complex plays an important role in the rescue of blocked DNA replication forks via replication fork reversal (RFR). RuvA specifically binds to HJ cruciform DNA, conferring on it an open structure. The RuvB hexamer acts as an ATP-dependent pump, pulling dsDNA into and through the RuvAB complex. HJ branch migration allows RuvC to scan DNA until it finds its consensus sequence, where it cleaves and resolves the cruciform DNA. This is Holliday junction branch migration complex subunit RuvA from Petrotoga mobilis (strain DSM 10674 / SJ95).